The following is a 450-amino-acid chain: Phosphoglucosamine mutase (450 aa).

Ser101 (phosphoserine intermediate) is an active-site residue. Residues Ser101, Asp243, Asp245, and Asp247 each coordinate Mg(2+). Ser101 carries the phosphoserine modification.

It belongs to the phosphohexose mutase family. Requires Mg(2+) as cofactor. In terms of processing, activated by phosphorylation.

The enzyme catalyses alpha-D-glucosamine 1-phosphate = D-glucosamine 6-phosphate. Catalyzes the conversion of glucosamine-6-phosphate to glucosamine-1-phosphate. The polypeptide is Phosphoglucosamine mutase (Desulfotalea psychrophila (strain LSv54 / DSM 12343)).